The following is a 458-amino-acid chain: Tetratricopeptide repeat protein 23-like (458 aa).

Coiled coils occupy residues 175-198 (GKQA…LNNG) and 246-278 (TSEL…QAYS).

The protein resides in the cytoplasm. The protein localises to the cytoskeleton. It localises to the microtubule organizing center. Its subcellular location is the centrosome. It is found in the spindle. The protein resides in the midbody. The chain is Tetratricopeptide repeat protein 23-like (Ttc23l) from Mus musculus (Mouse).